The chain runs to 300 residues: Geranylgeranyl pyrophosphate synthase (300 aa).

Met-1 is modified (N-acetylmethionine). Lys-25, Arg-28, and His-57 together coordinate isopentenyl diphosphate. Mg(2+) is bound by residues Asp-64 and Asp-68. Arg-73 contacts dimethylallyl diphosphate. Residue Arg-74 participates in isopentenyl diphosphate binding. Dimethylallyl diphosphate is bound by residues Lys-151, Thr-152, Gln-185, Lys-202, and Lys-212.

This sequence belongs to the FPP/GGPP synthase family. As to quaternary structure, homohexamer; trimer of homodimers. It depends on Mg(2+) as a cofactor. As to expression, abundantly expressed in testis. Found in other tissues to a lower extent. Expressed in dermal fibroblast and skeletal muscle.

It is found in the cytoplasm. The protein localises to the perinuclear region. Its subcellular location is the myofibril. The protein resides in the sarcomere. It localises to the z line. It catalyses the reaction isopentenyl diphosphate + dimethylallyl diphosphate = (2E)-geranyl diphosphate + diphosphate. The enzyme catalyses isopentenyl diphosphate + (2E)-geranyl diphosphate = (2E,6E)-farnesyl diphosphate + diphosphate. It carries out the reaction isopentenyl diphosphate + (2E,6E)-farnesyl diphosphate = (2E,6E,10E)-geranylgeranyl diphosphate + diphosphate. Its pathway is isoprenoid biosynthesis; farnesyl diphosphate biosynthesis; farnesyl diphosphate from geranyl diphosphate and isopentenyl diphosphate: step 1/1. The protein operates within isoprenoid biosynthesis; geranyl diphosphate biosynthesis; geranyl diphosphate from dimethylallyl diphosphate and isopentenyl diphosphate: step 1/1. It participates in isoprenoid biosynthesis; geranylgeranyl diphosphate biosynthesis; geranylgeranyl diphosphate from farnesyl diphosphate and isopentenyl diphosphate: step 1/1. Its activity is regulated as follows. Subject to product inhibition by geranylgeranyl diphosphate. In terms of biological role, catalyzes the trans-addition of the three molecules of IPP onto DMAPP to form geranylgeranyl pyrophosphate, an important precursor of carotenoids and geranylated proteins. The polypeptide is Geranylgeranyl pyrophosphate synthase (GGPS1) (Homo sapiens (Human)).